A 603-amino-acid chain; its full sequence is F-box only protein 46 (603 aa).

A disordered region spans residues 20-63; that stretch reads YSQNQPRPPSAALKPSACPEPGGGAEPDHGPAHSENTPPALATE. Phosphoserine; by ATM occurs at positions 21 and 67. Disordered stretches follow at residues 111–163, 235–301, 326–360, and 396–440; these read GGSR…PASA, EAQR…ARAK, LLAR…RDCG, and TVSP…AEGT. Over residues 152 to 163 the composition is skewed to low complexity; that stretch reads GPPAAEEGPASA. Serine 338 carries the phosphoserine modification. At threonine 347 the chain carries Phosphothreonine. Pro residues-rich tracts occupy residues 347 to 356 and 417 to 426; these read TPPAPPPPPA and DGPPEPPPAD. The region spanning 470 to 522 is the F-box domain; sequence RQYMLLLPEHVLVKIFSFLPTRALAALKCTCHHFKGIIEAFGVRATDSRWSRD.

In terms of assembly, part of a SCF (SKP1-cullin-F-box) protein ligase complex SCF(FBXO46) composed of CUL1, SKP1, RBX1 and FBXO46. Post-translationally, phosphorylated by ATM in response to DNA damage, promoting ubiquitination and degradation by the SCF(FBXO31) complex. In terms of processing, ATM-phosphorylated FBXO46 is ubiquitinated and degradaded by the SCF(FBXO31) complex in response to DNA damage.

It functions in the pathway protein modification; protein ubiquitination. In terms of biological role, substrate-recognition component of the SCF(FBXO46) protein ligase complex, which mediates the ubiquitination and degradation of target proteins. In absence of stress, the SCF(FBXO46) complex catalyzes ubiquitination and degradation of MTOR-phosphorylated FBXO31. This is F-box only protein 46 from Homo sapiens (Human).